Here is a 136-residue protein sequence, read N- to C-terminus: uncharacterized protein (136 aa).

The segment at 74-97 is disordered; it reads RADPGRKGRTQPLPTQGSARRFLH.

This is an uncharacterized protein from Saccharomyces cerevisiae (strain ATCC 204508 / S288c) (Baker's yeast).